The primary structure comprises 519 residues: Exodeoxyribonuclease 7 large subunit (519 aa).

The protein belongs to the XseA family. As to quaternary structure, heterooligomer composed of large and small subunits.

The protein resides in the cytoplasm. The enzyme catalyses Exonucleolytic cleavage in either 5'- to 3'- or 3'- to 5'-direction to yield nucleoside 5'-phosphates.. Bidirectionally degrades single-stranded DNA into large acid-insoluble oligonucleotides, which are then degraded further into small acid-soluble oligonucleotides. In Cereibacter sphaeroides (strain ATCC 17025 / ATH 2.4.3) (Rhodobacter sphaeroides), this protein is Exodeoxyribonuclease 7 large subunit.